Reading from the N-terminus, the 370-residue chain is Sodium-dependent organic anion transporter (370 aa).

The interval 1–24 is disordered; it reads MSADCEGNSTCPANSTEEDPPVGM. At 1 to 32 the chain is on the extracellular side; it reads MSADCEGNSTCPANSTEEDPPVGMEGQGSLKL. N-linked (GlcNAc...) asparagine glycosylation is found at asparagine 8 and asparagine 14. Residues 33 to 53 form a helical membrane-spanning segment; it reads VFTVLSAVMVGLVMFSFGCSV. Over 54 to 67 the chain is Cytoplasmic; it reads ESRKLWLHLRRPWG. A helical transmembrane segment spans residues 68-88; that stretch reads IAVGLLCQFGLMPLTAYLLAI. Over 89–97 the chain is Extracellular; the sequence is GFGLKPFQA. Residues 98 to 118 form a helical membrane-spanning segment; the sequence is IAVLIMGSCPGGTVSNVLTFW. Over 119-126 the chain is Cytoplasmic; it reads VDGDMDLS. Residues 127 to 147 form a helical membrane-spanning segment; the sequence is ISMTTCSTVAALGMMPLCLYV. The Extracellular portion of the chain corresponds to 148–159; sequence YTRSWTLPQSLT. Residues 160-180 traverse the membrane as a helical segment; it reads IPYQSIGITLVSLVVPVASGI. The Cytoplasmic segment spans residues 181–195; it reads YVNYRWPKQATFILK. Residues 196 to 216 form a helical membrane-spanning segment; sequence VGAAVGGMLLLVVAVTGVVLA. The Extracellular segment spans residues 217-224; it reads KGWNIDVT. The chain crosses the membrane as a helical span at residues 225 to 245; the sequence is LLVISCIFPLVGHVMGFLLAF. Over 246–265 the chain is Cytoplasmic; sequence LTHQSWQRCRTISIETGAQN. Residues 266 to 283 form a helical membrane-spanning segment; sequence IQLCIAMMQLSFSAEYLV. A topological domain (extracellular) is located at residue glutamine 284. The helical transmembrane segment at 285–305 threads the bilayer; the sequence is LLNFALAYGLFQVLHGLLIVA. The Cytoplasmic portion of the chain corresponds to 306–370; it reads AYQAYKRRQK…ELTSHVPSCE (65 aa).

It belongs to the bile acid:sodium symporter (BASS) (TC 2.A.28) family. In terms of processing, glycosylated. As to expression, highly expressed in heart, lung, spleen and adrenal gland. Moderately expressed in skeletal muscle, testis and small intestine.

It is found in the membrane. The enzyme catalyses estrone 3-sulfate(out) + 2 Na(+)(out) = estrone 3-sulfate(in) + 2 Na(+)(in). The catalysed reaction is 17beta-estradiol 3-sulfate(out) + 2 Na(+)(out) = 17beta-estradiol 3-sulfate(in) + 2 Na(+)(in). It catalyses the reaction dehydroepiandrosterone 3-sulfate(out) + 2 Na(+)(out) = dehydroepiandrosterone 3-sulfate(in) + 2 Na(+)(in). It carries out the reaction androst-5-ene-diol 3-sulfate(out) + 2 Na(+)(out) = androst-5-ene-diol 3-sulfate(in) + 2 Na(+)(in). The enzyme catalyses pregnenolone sulfate(out) + 2 Na(+)(out) = pregnenolone sulfate(in) + 2 Na(+)(in). The catalysed reaction is taurolithocholate 3-sulfate(out) + 2 Na(+)(out) = taurolithocholate 3-sulfate(in) + 2 Na(+)(in). It catalyses the reaction androsterone 3alpha-sulfate(out) + 2 Na(+)(out) = androsterone 3alpha-sulfate(in) + 2 Na(+)(in). It carries out the reaction 5alpha-dihydrotestosterone sulfate(out) + 2 Na(+)(out) = 5alpha-dihydrotestosterone sulfate(in) + 2 Na(+)(in). The enzyme catalyses 17beta-estradiol 17-sulfate(out) + 2 Na(+)(out) = 17beta-estradiol 17-sulfate(in) + 2 Na(+)(in). The catalysed reaction is 17alpha-hydroxypregnenolone 3-sulfate(out) + 2 Na(+)(out) = 17alpha-hydroxypregnenolone 3-sulfate(in) + 2 Na(+)(in). It catalyses the reaction epiandrosterone 3-sulfate(out) + 2 Na(+)(out) = epiandrosterone 3-sulfate(in) + 2 Na(+)(in). It carries out the reaction epitestosterone 17-sulfate(out) + 2 Na(+)(out) = epitestosterone 17-sulfate(in) + 2 Na(+)(in). The enzyme catalyses testosterone 17-sulfate(out) + 2 Na(+)(out) = testosterone 17-sulfate(in) + 2 Na(+)(in). The catalysed reaction is 16alpha-hydroxydehydroepiandrosterone 3-sulfate(out) + 2 Na(+)(out) = 16alpha-hydroxydehydroepiandrosterone 3-sulfate(in) + 2 Na(+)(in). In terms of biological role, transports sulfoconjugated steroid hormones from the extracellular compartment into the cytosol in a sodium-dependent manner without hydrolysis. Steroid sulfate hormones are commonly considered to be biologically inactive metabolites, that may be activated by steroid sulfatases into free steroids. May play an important role by delivering sulfoconjugated steroids to specific target cells in reproductive organs. May play a role transporting the estriol precursor 16alpha-hydroxydehydroepiandrosterone 3-sulfate (16a-OH-DHEAS) at the fetal blood vessel endothelium. Can also transport other sulfoconjugated molecules such as taurolithocholic acid-3-sulfate and sulfoconjugated pyrenes. This is Sodium-dependent organic anion transporter (Slc10a6) from Rattus norvegicus (Rat).